We begin with the raw amino-acid sequence, 443 residues long: Probable glycine dehydrogenase (decarboxylating) subunit 1 (443 aa).

The protein belongs to the GcvP family. N-terminal subunit subfamily. In terms of assembly, the glycine cleavage system is composed of four proteins: P, T, L and H. In this organism, the P 'protein' is a heterodimer of two subunits.

The catalysed reaction is N(6)-[(R)-lipoyl]-L-lysyl-[glycine-cleavage complex H protein] + glycine + H(+) = N(6)-[(R)-S(8)-aminomethyldihydrolipoyl]-L-lysyl-[glycine-cleavage complex H protein] + CO2. The glycine cleavage system catalyzes the degradation of glycine. The P protein binds the alpha-amino group of glycine through its pyridoxal phosphate cofactor; CO(2) is released and the remaining methylamine moiety is then transferred to the lipoamide cofactor of the H protein. This is Probable glycine dehydrogenase (decarboxylating) subunit 1 from Endomicrobium trichonymphae.